The following is a 137-amino-acid chain: Large ribosomal subunit protein uL16 (137 aa).

Belongs to the universal ribosomal protein uL16 family. In terms of assembly, part of the 50S ribosomal subunit.

Functionally, binds 23S rRNA and is also seen to make contacts with the A and possibly P site tRNAs. The chain is Large ribosomal subunit protein uL16 from Xylella fastidiosa (strain M23).